The following is a 487-amino-acid chain: UDP-glucose flavonoid 3-O-glucosyltransferase 7 (487 aa).

H23 (proton acceptor) is an active-site residue. Residue H23 coordinates an anthocyanidin. The active-site Charge relay is the D121. Residues A345, Q347, H362, W365, N366, S367, and E370 each contribute to the UDP-alpha-D-glucose site. G385 provides a ligand contact to an anthocyanidin. Positions 386 and 387 each coordinate UDP-alpha-D-glucose.

Belongs to the UDP-glycosyltransferase family. As to expression, strongly expressed in achenes and receptacles.

It carries out the reaction a flavonol + UDP-alpha-D-glucose = a flavonol 3-O-beta-D-glucoside + UDP + H(+). Functionally, broad spectrum multifunctional glucosyltransferase. Catalyzes the formation of flavonol 3-O- and 4'-O-glucosides during fruit ripening. Accepted substrates include several flavonoids, hydroxycoumarins and beta-naphthols. Uses UDP-Glc as a sugar donor, but not UDP-Gal or UDP-GlcUA. May also be involved in detoxification of xenobiotics. The sequence is that of UDP-glucose flavonoid 3-O-glucosyltransferase 7 from Fragaria ananassa (Strawberry).